The primary structure comprises 202 residues: ATP-dependent Clp protease proteolytic subunit (202 aa).

Serine 98 functions as the Nucleophile in the catalytic mechanism. Residue histidine 123 is part of the active site.

The protein belongs to the peptidase S14 family. As to quaternary structure, fourteen ClpP subunits assemble into 2 heptameric rings which stack back to back to give a disk-like structure with a central cavity, resembling the structure of eukaryotic proteasomes.

It is found in the cytoplasm. It catalyses the reaction Hydrolysis of proteins to small peptides in the presence of ATP and magnesium. alpha-casein is the usual test substrate. In the absence of ATP, only oligopeptides shorter than five residues are hydrolyzed (such as succinyl-Leu-Tyr-|-NHMec, and Leu-Tyr-Leu-|-Tyr-Trp, in which cleavage of the -Tyr-|-Leu- and -Tyr-|-Trp bonds also occurs).. In terms of biological role, cleaves peptides in various proteins in a process that requires ATP hydrolysis. Has a chymotrypsin-like activity. Plays a major role in the degradation of misfolded proteins. The polypeptide is ATP-dependent Clp protease proteolytic subunit (Syntrophobacter fumaroxidans (strain DSM 10017 / MPOB)).